Here is a 408-residue protein sequence, read N- to C-terminus: Collagen and calcium-binding EGF domain-containing protein 1 (408 aa).

Positions 1 to 35 (MVPPPLPSRGGAAKRQLGKSLGPLLLLLALGHTWT) are cleaved as a signal peptide. Positions 135 to 176 (DIDECATSNTTLCAHICINTMGSYHCECREGYILEDDGRTCT) constitute an EGF-like; calcium-binding domain. 3 disulfide bridges follow: Cys-139–Cys-151, Cys-147–Cys-160, and Cys-162–Cys-175. The N-linked (GlcNAc...) asparagine glycan is linked to Asn-143. A glycan (N-linked (GlcNAc...) asparagine) is linked at Asn-183. Disordered stretches follow at residues 246–335 (YLPG…GPPG) and 361–408 (HRTH…NFYP). Collagen-like domains are found at residues 247–292 (LPGP…PMGP) and 302–335 (GRRG…GPPG). Positions 272–281 (PGMPGPPGQP) are enriched in pro residues. Over residues 283–294 (PRGSMGPMGPSP) the composition is skewed to low complexity. The span at 325–334 (PGPPGSPGPP) shows a compositional bias: pro residues. An O-linked (Xyl...) (chondroitin sulfate) serine glycan is attached at Ser-387. A compositionally biased stretch (basic and acidic residues) spans 390-402 (DYSRRTEARDPEA).

The protein belongs to the CCBE1 family.

Its subcellular location is the secreted. In terms of biological role, required for lymphangioblast budding and angiogenic sprouting from venous endothelium during embryogenesis. In Mus musculus (Mouse), this protein is Collagen and calcium-binding EGF domain-containing protein 1 (Ccbe1).